The following is a 218-amino-acid chain: Small ribosomal subunit protein uS3 (218 aa).

One can recognise a KH type-2 domain in the interval isoleucine 38–lysine 106.

This sequence belongs to the universal ribosomal protein uS3 family. As to quaternary structure, part of the 30S ribosomal subunit. Forms a tight complex with proteins S10 and S14.

In terms of biological role, binds the lower part of the 30S subunit head. Binds mRNA in the 70S ribosome, positioning it for translation. This chain is Small ribosomal subunit protein uS3, found in Anoxybacillus flavithermus (strain DSM 21510 / WK1).